The primary structure comprises 238 residues: ATP synthase subunit a (238 aa).

A run of 5 helical transmembrane segments spans residues 18 to 38 (LTLLAVCIVTIAVIFAFVFWA), 76 to 96 (YSLLLFTIFLFVAVANNLGLF), 114 to 134 (NLAFDLALSLFITLMVHIEGV), 166 to 186 (SLAIRLFGNIFAGEVVTGLIV), and 193 to 213 (VYWWPIAFLVNMAWTAFSVFI).

The protein belongs to the ATPase A chain family. F-type ATPases have 2 components, CF(1) - the catalytic core - and CF(0) - the membrane proton channel. CF(1) has five subunits: alpha(3), beta(3), gamma(1), delta(1), epsilon(1). CF(0) has three main subunits: a(1), b(2) and c(9-12). The alpha and beta chains form an alternating ring which encloses part of the gamma chain. CF(1) is attached to CF(0) by a central stalk formed by the gamma and epsilon chains, while a peripheral stalk is formed by the delta and b chains.

It is found in the cell membrane. Key component of the proton channel; it plays a direct role in the translocation of protons across the membrane. The chain is ATP synthase subunit a from Streptococcus pyogenes serotype M5 (strain Manfredo).